A 352-amino-acid chain; its full sequence is Glycerol-1-phosphate dehydrogenase [NAD(P)+] (352 aa).

NAD(+) contacts are provided by residues 99-103 (GTKID) and 121-124 (TSPS). Substrate is bound at residue aspartate 126. NAD(+) is bound at residue serine 130. Aspartate 173 provides a ligand contact to substrate. Zn(2+) contacts are provided by aspartate 173 and histidine 253. Histidine 257 contributes to the substrate binding site. A Zn(2+)-binding site is contributed by histidine 269.

The protein belongs to the glycerol-1-phosphate dehydrogenase family. Zn(2+) serves as cofactor.

Its subcellular location is the cytoplasm. It catalyses the reaction sn-glycerol 1-phosphate + NAD(+) = dihydroxyacetone phosphate + NADH + H(+). It carries out the reaction sn-glycerol 1-phosphate + NADP(+) = dihydroxyacetone phosphate + NADPH + H(+). The protein operates within membrane lipid metabolism; glycerophospholipid metabolism. Catalyzes the NAD(P)H-dependent reduction of dihydroxyacetonephosphate (DHAP or glycerone phosphate) to glycerol 1-phosphate (G1P). The G1P thus generated is used as the glycerophosphate backbone of phospholipids in the cellular membranes of Archaea. The chain is Glycerol-1-phosphate dehydrogenase [NAD(P)+] from Thermoplasma volcanium (strain ATCC 51530 / DSM 4299 / JCM 9571 / NBRC 15438 / GSS1).